Here is an 84-residue protein sequence, read N- to C-terminus: Small ribosomal subunit protein bS20 (84 aa).

Belongs to the bacterial ribosomal protein bS20 family.

Its function is as follows. Binds directly to 16S ribosomal RNA. In Lactiplantibacillus plantarum (strain ATCC BAA-793 / NCIMB 8826 / WCFS1) (Lactobacillus plantarum), this protein is Small ribosomal subunit protein bS20.